The following is a 679-amino-acid chain: UvrABC system protein B (679 aa).

In terms of domain architecture, Helicase ATP-binding spans 25-176 (EGVNGGERYQ…NLRGSLRDLV (152 aa)). 38 to 45 (GATGTGKT) serves as a coordination point for ATP. The Beta-hairpin signature appears at 91 to 114 (YYDYYQPEAYVPVSDTYIAKTASI). The region spanning 429–591 (QVDDLLGEIR…ITPTAAGKKA (163 aa)) is the Helicase C-terminal domain. Positions 638–673 (PELIDQLELKMKESAKKLDFEEAANLRDRIKKLRQK) constitute a UVR domain.

This sequence belongs to the UvrB family. Forms a heterotetramer with UvrA during the search for lesions. Interacts with UvrC in an incision complex.

The protein resides in the cytoplasm. Its function is as follows. The UvrABC repair system catalyzes the recognition and processing of DNA lesions. A damage recognition complex composed of 2 UvrA and 2 UvrB subunits scans DNA for abnormalities. Upon binding of the UvrA(2)B(2) complex to a putative damaged site, the DNA wraps around one UvrB monomer. DNA wrap is dependent on ATP binding by UvrB and probably causes local melting of the DNA helix, facilitating insertion of UvrB beta-hairpin between the DNA strands. Then UvrB probes one DNA strand for the presence of a lesion. If a lesion is found the UvrA subunits dissociate and the UvrB-DNA preincision complex is formed. This complex is subsequently bound by UvrC and the second UvrB is released. If no lesion is found, the DNA wraps around the other UvrB subunit that will check the other stand for damage. The protein is UvrABC system protein B of Synechococcus sp. (strain CC9311).